The sequence spans 870 residues: Dynamin-2 (870 aa).

A Dynamin-type G domain is found at 28-294 (HLDLPQIAVV…LTNHIRESLP (267 aa)). Residues 38-45 (GGQSAGKS) form a G1 motif region. Residues Ser-41, Gly-43, Lys-44, Ser-45, Ser-46, Arg-59, and Gly-60 each coordinate GDP. The segment at 64 to 66 (VTR) is G2 motif. The segment at 136–139 (DLPG) is G3 motif. The tract at residues 205–208 (TKLD) is G4 motif. GDP is bound by residues Lys-206, Asp-208, and Asp-211. Tyr-231 is subject to Phosphotyrosine. The segment at 235–238 (VNRS) is G5 motif. GDP-binding residues include Asn-236, Arg-237, and Gln-239. N6-acetyllysine is present on Lys-299. One can recognise a PH domain in the interval 519 to 625 (LVIRRGWLTI…WKASFLRAGV (107 aa)). A Phosphotyrosine modification is found at Tyr-597. Lys-598 is subject to N6-acetyllysine. The 92-residue stretch at 653-744 (VETIRNLVDS…IIGDISTSTV (92 aa)) folds into the GED domain. Positions 741-870 (TSTVSTPVPP…IRPAEPSLLD (130 aa)) are disordered. Thr-755 carries the post-translational modification Phosphothreonine. A compositionally biased stretch (polar residues) spans 756–767 (WLQNTSSHSPTP). Ser-764 carries the phosphoserine; by CDK1 modification. The segment covering 826-846 (SAPPQIPSRPARIPPGIPPGV) has biased composition (pro residues). The span at 847–864 (PSRRAPAAPSRPTIIRPA) shows a compositional bias: low complexity.

It belongs to the TRAFAC class dynamin-like GTPase superfamily. Dynamin/Fzo/YdjA family. In terms of assembly, oligomerizes into a helical polymer that self-assembles around the vesicle membrane, when associated to the menbrane through lipid binding. Interacts with SHANK1 and SHANK2. Interacts with SNX9. Interacts (via C-terminal proline-rich domain (PRD)) with SNX18 (via SH3 domain); this interaction regulates ATG9A and ATG16L1 trafficking from recycling endosomes to sites of autophagosome formation. Interacts with SNX33 (via SH3 domain). Interacts with PSTPIP1 (via SH3 domain). Interacts with CTNND2. Interacts (via C-terminal proline-rich domain (PRD)) with BIN1 (via SH3 domain); this interaction allows the recruitment of DNM2 to the membrane tubules and inhibits self-assembly-stimulated GTPase activity on the membrane. Interacts with GABARAP, GABARAPL1 and GABARAPL2. Interacts with MAP1LC3B (the lipidate and non-lipidated LC3 form); this interaction mediates recycling endosome scission leading to autophagosome release. Interacts with ITSN1. Interacts with MYOF. May interact with PIK3C3. May be a component of a complex composed of RAB5A (in GDP-bound form), DYN2 and PIK3C3. Interacts with SDC4; this interaction is markedly enhanced at focal ahesion site upon induction of focal adhesions and stress-fiber formation. Interacts with ACTN1. Interacts with CTTN; this interaction stimulates the intrinsic GTPase activity of DNM2 and stabilizes the association of DNM2 and actin filaments; in addition this interaction is stimulated by ligand binding to the receptor, leading to the recruitment of the DNM2-CTTN complex to the sequestered receptor-ligand complex to its internalization. Interacts with NOSTRIN (via SH3 domain); this interaction allows the recruitment of NOS3 to dynamin-positive structures. Interacts (via C-terminal proline-rich domain (PRD)) with SH3BP4 (via SH3 domain); this interaction controls the GTPase activity and is prevented by EGFR-induced tyrosine phosphorylation of either DNM2 or SH3BP4. Interacts with MYO1E (via SH3 domain). Interacts with TUBG1; this interaction may participate in centrosome cohesion. In terms of processing, phosphorylation at Ser-848 by GSK3-alpha relieves the inhibition of BIN1 and promotes endocytosis. Phosphorylation at Ser-764 by CDK1 is greatly increased upon mitotic entry. It regulates cytokinesis downstream of calcineurin, and does not affect clathrin-mediated endocytosis. Dephosphorylated by calcineurin/PP2 during cytokinesis in a Ca(2+)- and calmodulin-dependent manner. Phosphorylated on tyrosine residues by EGFR. Phosphorylated on tyrosine residues after activation of SRC. As to expression, ubiquitously expressed. Brain expression is restricted to glial cells and fibroblasts. Highest levels in the testis.

Its subcellular location is the cytoplasm. It is found in the cytoskeleton. The protein resides in the cytoplasmic vesicle. It localises to the clathrin-coated vesicle. The protein localises to the cell projection. Its subcellular location is the uropodium. It is found in the endosome. The protein resides in the microtubule organizing center. It localises to the centrosome. The protein localises to the centriole. Its subcellular location is the recycling endosome. It is found in the phagocytic cup. The protein resides in the phagosome membrane. It localises to the podosome. The protein localises to the cell junction. Its subcellular location is the postsynaptic density. It is found in the synapse. The protein resides in the synaptosome. It localises to the midbody. The protein localises to the membrane. Its subcellular location is the clathrin-coated pit. It is found in the cell membrane. It carries out the reaction GTP + H2O = GDP + phosphate + H(+). In terms of biological role, catalyzes the hydrolysis of GTP and utilizes this energy to mediate vesicle scission at plasma membrane during endocytosis and filament remodeling at many actin structures during organization of the actin cytoskeleton. Plays an important role in vesicular trafficking processes, namely clathrin-mediated endocytosis (CME), exocytic and clathrin-coated vesicle from the trans-Golgi network, and PDGF stimulated macropinocytosis. During vesicular trafficking process, associates to the membrane, through lipid binding, and self-assembles into ring-like structure through oligomerization to form a helical polymer around the vesicle membrane and leading to vesicle scission. Plays a role in organization of the actin cytoskeleton by mediating arrangement of stress fibers and actin bundles in podocytes. During organization of the actin cytoskeleton, self-assembles into ring-like structure that directly bundles actin filaments to form typical membrane tubules decorated with dynamin spiral polymers. Self-assembly increases GTPase activity and the GTP hydrolysis causes the rapid depolymerization of dynamin spiral polymers, and results in dispersion of actin bundles. Remodels, through its interaction with CTTN, bundled actin filaments in a GTPase-dependent manner and plays a role in orchestrating the global actomyosin cytoskeleton. The interaction with CTTN stabilizes the interaction of DNM2 and actin filaments and stimulates the intrinsic GTPase activity that results in actin filament-barbed ends and increases the sensitivity of filaments in bundles to the actin depolymerizing factor, CFL1. Plays a role in the autophagy process, by participating in the formation of ATG9A vesicles destined for the autophagosomes through its interaction with SNX18, by mediating recycling endosome scission leading to autophagosome release through MAP1LC3B interaction and by regulating maturation of apoptotic cell corpse-containing phagosomes by recruiting PIK3C3 to the phagosome membrane. Also plays a role in cytokinesis. May participate in centrosome cohesion through its interaction with TUBG1. Plays a role in the regulation of neuron morphology, axon growth and formation of neuronal growth cones. Involved in membrane tubulation. The sequence is that of Dynamin-2 from Rattus norvegicus (Rat).